Reading from the N-terminus, the 194-residue chain is Ribosome maturation factor RimP (194 aa).

It belongs to the RimP family.

The protein localises to the cytoplasm. In terms of biological role, required for maturation of 30S ribosomal subunits. The protein is Ribosome maturation factor RimP of Jannaschia sp. (strain CCS1).